Consider the following 215-residue polypeptide: MNIILLGPPGAGKGTQASKLVADRGMVQLSTGDMLRAAVKAGTPIGLKAKAVMEAGELVSDEIVSGLIGEKLDSMAASEGAIFDGYPRTEAQAHSLDEILASRGRVLDHVIELEVDEDALVERITGRYTCANCGEGYHDRFKQPKVAGVCDVCGSAEFKRRPDDNEETVRTRMAEYRAKTAPILPVYEARGLVRRVDGMADMADVSAAIAAILDN.

10–15 (GAGKGT) is a binding site for ATP. The tract at residues 30-59 (STGDMLRAAVKAGTPIGLKAKAVMEAGELV) is NMP. AMP-binding positions include threonine 31, arginine 36, 57–59 (ELV), 85–88 (GYPR), and glutamine 92. Residues 126–163 (GRYTCANCGEGYHDRFKQPKVAGVCDVCGSAEFKRRPD) form an LID region. Arginine 127 provides a ligand contact to ATP. Residues cysteine 130, cysteine 133, cysteine 150, and cysteine 153 each coordinate Zn(2+). Arginine 160 and arginine 172 together coordinate AMP. Alanine 200 contributes to the ATP binding site.

Belongs to the adenylate kinase family. Monomer.

It localises to the cytoplasm. It catalyses the reaction AMP + ATP = 2 ADP. It functions in the pathway purine metabolism; AMP biosynthesis via salvage pathway; AMP from ADP: step 1/1. Functionally, catalyzes the reversible transfer of the terminal phosphate group between ATP and AMP. Plays an important role in cellular energy homeostasis and in adenine nucleotide metabolism. This chain is Adenylate kinase, found in Rhizorhabdus wittichii (strain DSM 6014 / CCUG 31198 / JCM 15750 / NBRC 105917 / EY 4224 / RW1) (Sphingomonas wittichii).